The sequence spans 256 residues: uncharacterized protein (256 aa).

A signal peptide spans 1-22; the sequence is MKSIKRIGLCISLLILSIFVTS. A lipid anchor (N-palmitoyl cysteine) is attached at Cys23. The S-diacylglycerol cysteine moiety is linked to residue Cys23.

The protein belongs to the staphylococcal tandem lipoprotein family.

The protein localises to the cell membrane. This is an uncharacterized protein from Staphylococcus aureus (strain USA300).